Here is a 169-residue protein sequence, read N- to C-terminus: Phosphopantetheine adenylyltransferase (169 aa).

Serine 10 contributes to the substrate binding site. Residues 10-11 (SF) and histidine 18 contribute to the ATP site. Substrate is bound by residues lysine 42, threonine 79, and arginine 93. ATP-binding positions include 94–96 (GLR), glutamate 104, and 129–135 (VRPITAT).

It belongs to the bacterial CoaD family. Homohexamer. It depends on Mg(2+) as a cofactor.

The protein localises to the cytoplasm. The catalysed reaction is (R)-4'-phosphopantetheine + ATP + H(+) = 3'-dephospho-CoA + diphosphate. It functions in the pathway cofactor biosynthesis; coenzyme A biosynthesis; CoA from (R)-pantothenate: step 4/5. In terms of biological role, reversibly transfers an adenylyl group from ATP to 4'-phosphopantetheine, yielding dephospho-CoA (dPCoA) and pyrophosphate. The sequence is that of Phosphopantetheine adenylyltransferase from Rhodopseudomonas palustris (strain TIE-1).